Reading from the N-terminus, the 513-residue chain is Sterol 14-alpha demethylase (513 aa).

Residues 8 to 28 form a helical membrane-spanning segment; sequence AYALLAFVAIMALNVTYQFLF. N-linked (GlcNAc...) asparagine glycosylation is found at Asn-32 and Asn-332. Cys-453 lines the heme pocket.

The protein belongs to the cytochrome P450 family. The cofactor is heme.

It is found in the endoplasmic reticulum membrane. It carries out the reaction a 14alpha-methyl steroid + 3 reduced [NADPH--hemoprotein reductase] + 3 O2 = a Delta(14) steroid + formate + 3 oxidized [NADPH--hemoprotein reductase] + 4 H2O + 4 H(+). The enzyme catalyses a 14alpha-methyl steroid + reduced [NADPH--hemoprotein reductase] + O2 = a 14alpha-hydroxymethyl steroid + oxidized [NADPH--hemoprotein reductase] + H2O + H(+). The catalysed reaction is a 14alpha-hydroxymethyl steroid + reduced [NADPH--hemoprotein reductase] + O2 = a 14alpha-formyl steroid + oxidized [NADPH--hemoprotein reductase] + 2 H2O + H(+). It catalyses the reaction a 14alpha-formyl steroid + reduced [NADPH--hemoprotein reductase] + O2 = a Delta(14) steroid + formate + oxidized [NADPH--hemoprotein reductase] + H2O + 2 H(+). It carries out the reaction lanosterol + 3 reduced [NADPH--hemoprotein reductase] + 3 O2 = 4,4-dimethyl-5alpha-cholesta-8,14,24-trien-3beta-ol + formate + 3 oxidized [NADPH--hemoprotein reductase] + 4 H2O + 4 H(+). The enzyme catalyses lanosterol + reduced [NADPH--hemoprotein reductase] + O2 = 32-hydroxylanosterol + oxidized [NADPH--hemoprotein reductase] + H2O + H(+). The catalysed reaction is 32-hydroxylanosterol + reduced [NADPH--hemoprotein reductase] + O2 = 32-oxolanosterol + oxidized [NADPH--hemoprotein reductase] + 2 H2O + H(+). It catalyses the reaction 32-oxolanosterol + reduced [NADPH--hemoprotein reductase] + O2 = 4,4-dimethyl-5alpha-cholesta-8,14,24-trien-3beta-ol + formate + oxidized [NADPH--hemoprotein reductase] + H2O + 2 H(+). It carries out the reaction eburicol + 3 reduced [NADPH--hemoprotein reductase] + 3 O2 = 14-demethyleburicol + formate + 3 oxidized [NADPH--hemoprotein reductase] + 4 H2O + 4 H(+). The enzyme catalyses eburicol + reduced [NADPH--hemoprotein reductase] + O2 = 32-hydroxyeburicol + oxidized [NADPH--hemoprotein reductase] + H2O + H(+). The catalysed reaction is 32-hydroxyeburicol + reduced [NADPH--hemoprotein reductase] + O2 = 32-oxoeburicol + oxidized [NADPH--hemoprotein reductase] + 2 H2O + H(+). It catalyses the reaction 32-oxoeburicol + reduced [NADPH--hemoprotein reductase] + O2 = 14-demethyleburicol + formate + oxidized [NADPH--hemoprotein reductase] + H2O + 2 H(+). It functions in the pathway steroid biosynthesis; sterol biosynthesis. Functionally, sterol 14alpha-demethylase, encoded by cyp51A, cyp51B and cyp51C, that plays a critical role in the third module of ergosterol biosynthesis pathway, being ergosterol the major sterol component in fungal membranes that participates in a variety of functions. The third module or late pathway involves the ergosterol synthesis itself through consecutive reactions that mainly occur in the endoplasmic reticulum (ER) membrane. In filamentous fungi, during the initial step of this module, lanosterol (lanosta-8,24-dien-3beta-ol) can be metabolized to eburicol. Sterol 14alpha-demethylase catalyzes the three-step oxidative removal of the 14alpha-methyl group (C-32) of both these sterols in the form of formate, and converts eburicol and lanosterol to 14-demethyleburicol (4,4,24-trimethylergosta-8,14,24(28)-trienol) and 4,4-dimethyl-5alpha-cholesta-8,14,24-trien-3beta-ol, respectively, which are further metabolized by other enzymes in the pathway to ergosterol. Can also use substrates not intrinsic to fungi, such as 24,25-dihydrolanosterol (DHL), producing 4,4'-dimethyl-8,14-cholestadien-3-beta-ol, but at lower rates than the endogenous substrates. As a target of azole drugs, plays a crucial role in azole drug susceptibility. The chain is Sterol 14-alpha demethylase from Aspergillus flavus (strain ATCC 200026 / FGSC A1120 / IAM 13836 / NRRL 3357 / JCM 12722 / SRRC 167).